The primary structure comprises 198 residues: UPF0548 protein DR_2035 (198 aa).

It belongs to the UPF0548 family.

This chain is UPF0548 protein DR_2035, found in Deinococcus radiodurans (strain ATCC 13939 / DSM 20539 / JCM 16871 / CCUG 27074 / LMG 4051 / NBRC 15346 / NCIMB 9279 / VKM B-1422 / R1).